A 438-amino-acid chain; its full sequence is MKLWGGRFKGEENKLMEDFNSSLSFDKRLYKEDILGSKAHVKMLGNCNILKDYEVEEIIKGLDSILKDIEDDKLKIQGEYEDIHSFIESNLIQRIGDVGKKLHTARSRNDQVAVDFKLYAKNISLKIIESIETLQNTIKNLAEKNNVIMPGYTHLQRAQVVTFKHHIMAYYNMLKRDKKRIENSIENMDESPLGCCALAGTTYETDRKFTAKKLGFRKEVDNFLDGVSDRDFVIEFISDFSIIMMHLSRLSEELILWSSKEFDFIEISDEFSTGSSIMPQKKNPDAAELIRGKTGRVYGDLIAILTVMKGIPLAYNKDMQEDKESFFDASDTVLSCIKVMEGMLSSLKVKKGNTLRAVKMGFLNATESADYLVLKGVPFRDAHKIIGEIVLYCEEKDKSIEELNINELKKFSTFFNEDIYEFIDYENALNRGIKKEIK.

It belongs to the lyase 1 family. Argininosuccinate lyase subfamily.

The protein resides in the cytoplasm. It carries out the reaction 2-(N(omega)-L-arginino)succinate = fumarate + L-arginine. It participates in amino-acid biosynthesis; L-arginine biosynthesis; L-arginine from L-ornithine and carbamoyl phosphate: step 3/3. This is Argininosuccinate lyase from Clostridium tetani (strain Massachusetts / E88).